The following is a 153-amino-acid chain: Peptidoglycan-associated lipoprotein (153 aa).

The first 19 residues, 1–19 (MNKFVKSLLVAGSVAALAA), serve as a signal peptide directing secretion. C20 carries N-palmitoyl cysteine lipidation. Residue C20 is the site of S-diacylglycerol cysteine attachment. One can recognise an OmpA-like domain in the interval 40-153 (SVADLQQRYN…SKNRRAVLAY (114 aa)). Peptidoglycan binding stretches follow at residues 55–56 (FD) and 97–101 (YNIAL).

The protein belongs to the Pal lipoprotein family. As to quaternary structure, the Tol-Pal system is composed of five core proteins: the inner membrane proteins TolA, TolQ and TolR, the periplasmic protein TolB and the outer membrane protein Pal. They form a network linking the inner and outer membranes and the peptidoglycan layer.

Its subcellular location is the cell outer membrane. Its function is as follows. Part of the Tol-Pal system, which plays a role in outer membrane invagination during cell division and is important for maintaining outer membrane integrity. This Haemophilus influenzae (strain ATCC 51907 / DSM 11121 / KW20 / Rd) protein is Peptidoglycan-associated lipoprotein.